The primary structure comprises 338 residues: tRNA N6-adenosine threonylcarbamoyltransferase (338 aa).

Fe cation-binding residues include His-110, His-114, and Tyr-131. Substrate-binding positions include 131–135, Asp-163, Asp-184, and Asn-268; that span reads YVSGG. A Fe cation-binding site is contributed by Asp-296.

It belongs to the KAE1 / TsaD family. Fe(2+) is required as a cofactor.

The protein resides in the cytoplasm. It catalyses the reaction L-threonylcarbamoyladenylate + adenosine(37) in tRNA = N(6)-L-threonylcarbamoyladenosine(37) in tRNA + AMP + H(+). Its function is as follows. Required for the formation of a threonylcarbamoyl group on adenosine at position 37 (t(6)A37) in tRNAs that read codons beginning with adenine. Is probably involved in the transfer of the threonylcarbamoyl moiety of threonylcarbamoyl-AMP (TC-AMP) to the N6 group of A37. This is tRNA N6-adenosine threonylcarbamoyltransferase from Staphylothermus marinus (strain ATCC 43588 / DSM 3639 / JCM 9404 / F1).